A 131-amino-acid chain; its full sequence is Lactose permease (131 aa).

The Cytoplasmic portion of the chain corresponds to 1-13; it reads MKFSELAPRERHN. A helical membrane pass occupies residues 14–34; the sequence is FVYFLLFFFFYHFIMSAYFPF. The Periplasmic portion of the chain corresponds to 35 to 50; the sequence is FPVWLADVNHLTKTET. The helical transmembrane segment at 51–71 threads the bilayer; it reads GIVFSSISLFAIIFQPVFGLM. The Cytoplasmic portion of the chain corresponds to 72–80; the sequence is SDKLGLRKH. Residues 81–101 form a helical membrane-spanning segment; the sequence is LLWTITVLLILFAPFFIFVFS. Position 102 (Pro-102) is a topological domain, periplasmic. The helical transmembrane segment at 103 to 123 threads the bilayer; sequence LLQMNIIAGSLVGGIYLGIVF. Topologically, residues 124-131 are cytoplasmic; it reads STAPGVGS.

It belongs to the major facilitator superfamily. Oligosaccharide:H(+) symporter (OHS) (TC 2.A.1.5) family.

Its subcellular location is the cell inner membrane. It catalyses the reaction lactose(in) + H(+)(in) = lactose(out) + H(+)(out). Its function is as follows. Responsible for transport of beta-galactosides into the cell, with the concomitant import of a proton (symport system). This Klebsiella pneumoniae protein is Lactose permease (lacY).